Consider the following 797-residue polypeptide: Outer membrane protein assembly factor BamA (797 aa).

Residues 1 to 21 (MKLKQIASALMMLGISPLALA) form the signal peptide. POTRA domains are found at residues 23 to 90 (FTIQ…VIER), 91 to 171 (PTIG…IDEG), 174 to 262 (AKIT…VHEG), 265 to 344 (FRWG…IEPG), and 347 to 421 (IYVN…LTER).

It belongs to the BamA family. As to quaternary structure, part of the Bam complex.

The protein localises to the cell outer membrane. Part of the outer membrane protein assembly complex, which is involved in assembly and insertion of beta-barrel proteins into the outer membrane. The polypeptide is Outer membrane protein assembly factor BamA (Neisseria meningitidis serogroup B (strain ATCC BAA-335 / MC58)).